Here is a 108-residue protein sequence, read N- to C-terminus: Parvalbumin beta (108 aa).

An N-acetylalanine modification is found at alanine 1. Cysteines 11 and 33 form a disulfide. EF-hand domains are found at residues 38–73 (KSAD…FKAG) and 77–108 (LTDA…LVKA). Residues aspartate 51, aspartate 53, serine 55, phenylalanine 57, glutamate 59, glutamate 62, aspartate 90, aspartate 92, aspartate 94, alanine 96, and glutamate 101 each contribute to the Ca(2+) site.

This sequence belongs to the parvalbumin family.

In muscle, parvalbumin is thought to be involved in relaxation after contraction. It binds two calcium ions. The protein is Parvalbumin beta of Merlangius merlangus (Whiting).